A 248-amino-acid polypeptide reads, in one-letter code: Protein PARTING DANCERS homolog (248 aa).

The span at 1–10 shows a compositional bias: polar residues; that stretch reads MERSTHSTGW. Residues 1 to 25 are disordered; sequence MERSTHSTGWTCLPPPPPEPAAPGR.

This sequence belongs to the ERCC1/RAD10/SWI10 family. Interacts with SHOC1 (via C-terminus). Interacts with HEI10. In terms of tissue distribution, highly expressed in anthers and pistil during meiosis. Expressed in pollen mother cells (PMCs) during meiosis. Expressed at low levels in roots, shoots, leaves, flowers, and glumes.

It is found in the chromosome. The protein resides in the nucleus. It localises to the cytoplasm. Its subcellular location is the cell membrane. In terms of biological role, essential for normal crossover (CO) formation during meiosis. Essential component for the formation of class I meiotic COs. Interacts with SHOC1, another meiotic component, to regulate CO formation, possibly by stabilizing the recombination intermediates during meiosis. PTD and SHOC1 may form transient heterotrimeric or heterotetrameric complexes with HEI10 and/or ZIP4 to promote class I COs formation. Does not seem to be involved in early meiotic recombination steps involving double-strand break (DSB) formation, processing, and single-strand invasion. Does not seem to be involved in homologous pairing or synaptonemal complex (SC) assembly. In Oryza sativa subsp. japonica (Rice), this protein is Protein PARTING DANCERS homolog.